A 613-amino-acid polypeptide reads, in one-letter code: Probable potassium transport system protein Kup 1 (613 aa).

Helical transmembrane passes span V40–V60, M93–I113, P127–L147, L158–V178, A201–L221, W237–L257, P266–A286, V288–L308, I327–F347, A356–M376, L384–A404, and V409–T429.

This sequence belongs to the HAK/KUP transporter (TC 2.A.72) family.

The protein localises to the cell inner membrane. It carries out the reaction K(+)(in) + H(+)(in) = K(+)(out) + H(+)(out). Its function is as follows. Transport of potassium into the cell. Likely operates as a K(+):H(+) symporter. This chain is Probable potassium transport system protein Kup 1, found in Ralstonia nicotianae (strain ATCC BAA-1114 / GMI1000) (Ralstonia solanacearum).